The sequence spans 89 residues: Small ribosomal subunit protein uS14A (89 aa).

Belongs to the universal ribosomal protein uS14 family. In terms of assembly, part of the 30S ribosomal subunit. Contacts proteins S3 and S10.

Functionally, binds 16S rRNA, required for the assembly of 30S particles and may also be responsible for determining the conformation of the 16S rRNA at the A site. This Limosilactobacillus reuteri (strain DSM 20016) (Lactobacillus reuteri) protein is Small ribosomal subunit protein uS14A.